The sequence spans 63 residues: 2-hydroxymuconate tautomerase (63 aa).

The active-site Proton acceptor; via imino nitrogen is the Pro2.

The protein belongs to the 4-oxalocrotonate tautomerase family. In terms of assembly, homohexamer.

It carries out the reaction (2Z,4E)-2-hydroxyhexa-2,4-dienedioate = (3E)-2-oxohex-3-enedioate. Its pathway is xenobiotic degradation; toluene degradation. Functionally, catalyzes the ketonization of 2-hydroxymuconate stereoselectively to yield 2-oxo-3-hexenedioate. In Pseudomonas sp. (strain CF600), this protein is 2-hydroxymuconate tautomerase (dmpI).